A 416-amino-acid polypeptide reads, in one-letter code: MELRVGNKYRLGRKIGSGSFGDIYLGANIASGEEVAIKLECVKTKHPQLHIESKFYKMMQGGVGIPSIKWCGAEGDYNVMVMELLGPSLEDLFNFCSRKFSLKTVLLLADQMISRIEYIHSKNFIHRDVKPDNFLMGLGKKGNLVYIIDFGLAKKYRDARTHQHIPYRENKNLTGTARYASINTHLGIEQSRRDDLESLGYVLMYFNLGSLPWQGLKAATKRQKYERISEKKMSTPIEVLCKGYPSEFSTYLNFCRSLRFDDKPDYSYLRQLFRNLFHRQGFSYDYVFDWNMLKFGAARNPEDVDRERREHEREERMGQLRGSATRALPPGPPTGATANRLRSAAEPVASTPASRIQQTGNTSPRAISRADRERKVSMRLHRGAPANVSSSDLTGRQEVSRLAASQTSVPFDHLGK.

Residues 9 to 277 (YRLGRKIGSG…YLRQLFRNLF (269 aa)) enclose the Protein kinase domain. Residues 15 to 23 (IGSGSFGDI) and Lys-38 contribute to the ATP site. Catalysis depends on Asp-128, which acts as the Proton acceptor. Over residues 301-318 (PEDVDRERREHEREERMG) the composition is skewed to basic and acidic residues. The disordered stretch occupies residues 301-416 (PEDVDRERRE…TSVPFDHLGK (116 aa)). Phosphoserine occurs at positions 343 and 354. Residues 351–365 (TPASRIQQTGNTSPR) are compositionally biased toward polar residues. At Thr-362 the chain carries Phosphothreonine. A Phosphoserine modification is found at Ser-363. Arg-382 is subject to Omega-N-methylarginine. Phosphoserine is present on residues Ser-389, Ser-405, and Ser-408.

This sequence belongs to the protein kinase superfamily. CK1 Ser/Thr protein kinase family. Casein kinase I subfamily. Monomer. Component of the circadian core oscillator, which includes the CRY proteins, CLOCK, or NPAS2, ARTNL/BMAL1 or ARTNL2/BMAL2, CSNK1D and/or CSNK1E, TIMELESS and the PER proteins. Interacts with ANKRD6. Interacts with PER1. Interacts with DBNDD2, LRP5, LRP6 and SOCS3. Interacts with SNAI1 (via zinc fingers). Interacts with DDX3X; this interaction greatly enhances CSNK1E affinity for ATP and DVL2 phosphorylation, but inhibits DDX3X ATPase/helicase activity. In the presence of RNA, the interaction is decreased. Interacts with FAM83A, FAM83B, FAM83E and FAM83H (via DUF1669). Post-translationally, autophosphorylated. Partially dephosphorylated by PPP5C. May be dephosphorylated by PP1. Expressed in all tissues examined, including brain, heart, lung, liver, pancreas, kidney, placenta and skeletal muscle. Expressed in monocytes and lymphocytes but not in granulocytes.

The protein localises to the cytoplasm. Its subcellular location is the nucleus. It carries out the reaction L-seryl-[protein] + ATP = O-phospho-L-seryl-[protein] + ADP + H(+). It catalyses the reaction L-threonyl-[protein] + ATP = O-phospho-L-threonyl-[protein] + ADP + H(+). With respect to regulation, phosphorylation leads to a decrease in the catalytic activity. In terms of biological role, casein kinases are operationally defined by their preferential utilization of acidic proteins such as caseins as substrates. Participates in Wnt signaling. Phosphorylates DVL1. Phosphorylates DVL2. Phosphorylates NEDD9/HEF1. Central component of the circadian clock. In balance with PP1, determines the circadian period length, through the regulation of the speed and rhythmicity of PER1 and PER2 phosphorylation. Controls PER1 and PER2 nuclear transport and degradation. Inhibits cytokine-induced granuloytic differentiation. This is Casein kinase I isoform epsilon (Csnk1e) from Mus musculus (Mouse).